The primary structure comprises 96 residues: Defensin-like protein 151 (96 aa).

An N-terminal signal peptide occupies residues 1-29 (MKKPSQLSATILTIFVILAIGVMVKETLG). 4 disulfide bridges follow: Cys-35/Cys-88, Cys-48/Cys-68, Cys-53/Cys-82, and Cys-57/Cys-84.

Belongs to the DEFL family.

The protein resides in the secreted. The chain is Defensin-like protein 151 (LCR17) from Arabidopsis thaliana (Mouse-ear cress).